The sequence spans 445 residues: Argininosuccinate synthase (445 aa).

Residues 17-25 (AFSGGLDTS) and alanine 43 each bind ATP. Tyrosine 99 lines the L-citrulline pocket. ATP contacts are provided by glycine 129 and threonine 131. Threonine 131, asparagine 135, and aspartate 136 together coordinate L-aspartate. Asparagine 135 contacts L-citrulline. ATP is bound at residue aspartate 136. 2 residues coordinate L-citrulline: arginine 139 and serine 192. Aspartate 194 contributes to the ATP binding site. Positions 201, 203, and 280 each coordinate L-citrulline.

This sequence belongs to the argininosuccinate synthase family. Type 2 subfamily. In terms of assembly, homotetramer.

The protein localises to the cytoplasm. It carries out the reaction L-citrulline + L-aspartate + ATP = 2-(N(omega)-L-arginino)succinate + AMP + diphosphate + H(+). It functions in the pathway amino-acid biosynthesis; L-arginine biosynthesis; L-arginine from L-ornithine and carbamoyl phosphate: step 2/3. The chain is Argininosuccinate synthase from Rhodopseudomonas palustris (strain ATCC BAA-98 / CGA009).